A 339-amino-acid polypeptide reads, in one-letter code: HTH-type transcriptional regulator SyrM 2 (339 aa).

Residues Val-32–Thr-89 form the HTH lysR-type domain. A DNA-binding region (H-T-H motif) is located at residues Ile-49 to Ser-68.

Belongs to the LysR transcriptional regulatory family.

In terms of biological role, acts in trans to stimulate nod gene expression. The protein is HTH-type transcriptional regulator SyrM 2 (syrM2) of Sinorhizobium fredii (strain NBRC 101917 / NGR234).